We begin with the raw amino-acid sequence, 526 residues long: GMP synthase [glutamine-hydrolyzing] (526 aa).

One can recognise a Glutamine amidotransferase type-1 domain in the interval 4–202 (KILILDFGSQ…VHDICGCDQS (199 aa)). Cys-81 serves as the catalytic Nucleophile. Catalysis depends on residues His-176 and Glu-178. One can recognise a GMPS ATP-PPase domain in the interval 203-395 (WNMPDYVETA…LGLPHDMVYR (193 aa)). Residue 230 to 236 (SGGVDSS) participates in ATP binding.

As to quaternary structure, homodimer.

The enzyme catalyses XMP + L-glutamine + ATP + H2O = GMP + L-glutamate + AMP + diphosphate + 2 H(+). Its pathway is purine metabolism; GMP biosynthesis; GMP from XMP (L-Gln route): step 1/1. Functionally, catalyzes the synthesis of GMP from XMP. The sequence is that of GMP synthase [glutamine-hydrolyzing] from Methylobacillus flagellatus (strain ATCC 51484 / DSM 6875 / VKM B-1610 / KT).